Reading from the N-terminus, the 539-residue chain is uncharacterized protein (539 aa).

Ser-216 (acyl-ester intermediate) is an active-site residue.

The protein belongs to the type-B carboxylesterase/lipase family.

It is found in the cytoplasm. It localises to the nucleus. This is an uncharacterized protein from Schizosaccharomyces pombe (strain 972 / ATCC 24843) (Fission yeast).